The following is a 413-amino-acid chain: Multidrug resistance protein MdtA (413 aa).

A signal peptide spans 1-20; the sequence is MKGSNTFRWAIAIGVVVAAA. Disordered stretches follow at residues 31–57 and 392–413; these read SPTA…RDGP and PQTT…GARA. The segment covering 397-413 has biased composition (basic and acidic residues); that stretch reads ADEKSPSRHEGQKGARA.

It belongs to the membrane fusion protein (MFP) (TC 8.A.1) family. In terms of assembly, part of a tripartite efflux system composed of MdtA, MdtB and MdtC.

The protein localises to the cell inner membrane. This chain is Multidrug resistance protein MdtA, found in Salmonella heidelberg (strain SL476).